Reading from the N-terminus, the 971-residue chain is Translation initiation factor IF-2 (971 aa).

The segment covering 48 to 63 (DHLRKSHGATDGDKRK) has biased composition (basic and acidic residues). Disordered stretches follow at residues 48-86 (DHLR…ARTI) and 100-381 (DDVA…STFQ). Positions 105–114 (GADQGQAQVA) are enriched in low complexity. Residues 121–181 (ELKRREEEAR…EEEAATKRAA (61 aa)) show a composition bias toward basic and acidic residues. Low complexity predominate over residues 182–202 (AEVAAAQQQAAAQQAAAEQEA). Residues 210–261 (DEARAAAERAAQREAAKKAEDAAREAADKARAEQEEISKRRAAAEAEARAIR) are compositionally biased toward basic and acidic residues. Pro residues predominate over residues 277–286 (PPKPVEPPKP). A compositionally biased stretch (low complexity) spans 304-326 (ARPAVKKPAGAAAPATTQAPAGA). Residues 356 to 369 (SSGGVDRGWRGGPK) show a composition bias toward gly residues. Residues 471–640 (PRPPVVTVMG…LLQAEVLELK (170 aa)) enclose the tr-type G domain. The interval 480-487 (GHVDHGKT) is G1. 480-487 (GHVDHGKT) is a binding site for GTP. The segment at 505 to 509 (GITQH) is G2. The segment at 526-529 (DTPG) is G3. GTP contacts are provided by residues 526-530 (DTPGH) and 580-583 (NKID). The segment at 580–583 (NKID) is G4. Residues 616–618 (SAK) are G5.

The protein belongs to the TRAFAC class translation factor GTPase superfamily. Classic translation factor GTPase family. IF-2 subfamily.

The protein localises to the cytoplasm. One of the essential components for the initiation of protein synthesis. Protects formylmethionyl-tRNA from spontaneous hydrolysis and promotes its binding to the 30S ribosomal subunits. Also involved in the hydrolysis of GTP during the formation of the 70S ribosomal complex. In Burkholderia orbicola (strain AU 1054), this protein is Translation initiation factor IF-2.